The sequence spans 525 residues: MQRVMPASWSSGGSLLPFRVSTTTKVVLFSLTAGVALMSVLSRFLRRRKPPRPPRRARKYTGRRNRNSMRSPNDLISIAGSKASARSGSPVGSTLAYSDRLSMASGSIGVGVLGVQNAGPGSSVVTQLTAQQLGMMGMEALDTVINFWEDALAAHYSPGGLPALLTTAEDSEFCREIQNLLEMAYTLQEQSELLFLDQRSVLFREEHSIDEAEEEAGEADDDRRSRKSGSVLSRAGSDPNFDSAESFASALDQVADLREFDGFIETSYEEYPLFQSALKHHDEYTVPCRTIRAELMHCSTDTEYLAKLHCVRLAFQFLFKDPAVGQWICDAGRQILTDLLCLGDKDTKEFLVGYEDMVNYLHDSNNWPCIQMELEQRNVKAMTFYDICLDFIILDSFKDLDAPPASVTAVVQNRWLSNGFKETALTTAVWSVLKAKKRMLKFPNGFMSHFYVISEQISPLMAWGFFGPNENLRDICHYFREELLAFLGDIFSFQKSRFTTIEEFSQDVLQHMQTRVNNIGVKFSQ.

The helical transmembrane segment at 26-45 (VVLFSLTAGVALMSVLSRFL) threads the bilayer. Over residues 47–67 (RRKPPRPPRRARKYTGRRNRN) the composition is skewed to basic residues. 2 disordered regions span residues 47–73 (RRKPPRPPRRARKYTGRRNRNSMRSPN) and 210–239 (DEAEEEAGEADDDRRSRKSGSVLSRAGSDP). Over residues 211-220 (EAEEEAGEAD) the composition is skewed to acidic residues.

It belongs to the mitoguardin family. As to quaternary structure, interacts with zuc.

It is found in the mitochondrion outer membrane. Regulator of mitochondrial fusion required to maintain neuronal homeostasis. This Drosophila melanogaster (Fruit fly) protein is Mitoguardin.